A 192-amino-acid polypeptide reads, in one-letter code: Probable thymidylate kinase (192 aa).

An ATP-binding site is contributed by 8 to 15; it reads GIDGSGKS.

It belongs to the thymidylate kinase family.

It carries out the reaction dTMP + ATP = dTDP + ADP. The protein is Probable thymidylate kinase of Pyrobaculum aerophilum (strain ATCC 51768 / DSM 7523 / JCM 9630 / CIP 104966 / NBRC 100827 / IM2).